Reading from the N-terminus, the 428-residue chain is Chaperone SurA (428 aa).

An N-terminal signal peptide occupies residues 1-19 (MNIWKTLLLGMLVTGSAVS). 2 PpiC domains span residues 170–268 (SVEY…KIED) and 277–377 (VTEV…EVLD).

Its subcellular location is the periplasm. The enzyme catalyses [protein]-peptidylproline (omega=180) = [protein]-peptidylproline (omega=0). Chaperone involved in the correct folding and assembly of outer membrane proteins. Recognizes specific patterns of aromatic residues and the orientation of their side chains, which are found more frequently in integral outer membrane proteins. May act in both early periplasmic and late outer membrane-associated steps of protein maturation. The protein is Chaperone SurA of Vibrio vulnificus (strain CMCP6).